The chain runs to 399 residues: Leu/Ile/Val-binding protein homolog 7 (399 aa).

Residues 1–22 form the signal peptide; sequence MEKHLIALSVAALLAGAAPASA.

The protein belongs to the leucine-binding protein family.

Its function is as follows. Component of an amino-acid transport system. The protein is Leu/Ile/Val-binding protein homolog 7 of Brucella suis biovar 1 (strain 1330).